A 102-amino-acid chain; its full sequence is U7-agatoxin-Ao1a (102 aa).

The signal sequence occupies residues 1–19 (MTQAFFFLLLVSLVASTLS). Positions 20-39 (KEFNFCPRAIDEVCPVKEKR) are excised as a propeptide. Tryptophan amide is present on W101.

Belongs to the venom protein 11 family. 02 (wap-2) subfamily. In terms of processing, contains 5 disulfide bonds. Expressed by the venom gland.

The protein resides in the secreted. The protein is U7-agatoxin-Ao1a of Agelena orientalis (Funnel-web spider).